Here is a 250-residue protein sequence, read N- to C-terminus: uncharacterized protein (250 aa).

Residues 4–24 (FKYLLFLVVFAVFFLTFAFFD) traverse the membrane as a helical segment.

The protein resides in the membrane. This is an uncharacterized protein from Methanocaldococcus jannaschii (strain ATCC 43067 / DSM 2661 / JAL-1 / JCM 10045 / NBRC 100440) (Methanococcus jannaschii).